A 154-amino-acid polypeptide reads, in one-letter code: Ribonuclease HI (154 aa).

The RNase H type-1 domain occupies 1–142 (MPKQIEIFTD…CDELAKKGAE (142 aa)). Asp-10, Glu-48, Asp-70, and Asp-134 together coordinate Mg(2+).

The protein belongs to the RNase H family. In terms of assembly, monomer. The cofactor is Mg(2+).

It is found in the cytoplasm. It carries out the reaction Endonucleolytic cleavage to 5'-phosphomonoester.. Functionally, endonuclease that specifically degrades the RNA of RNA-DNA hybrids. This is Ribonuclease HI (rnhA) from Haemophilus influenzae (strain ATCC 51907 / DSM 11121 / KW20 / Rd).